Here is a 264-residue protein sequence, read N- to C-terminus: tRNA (guanine-N(1)-)-methyltransferase (264 aa).

S-adenosyl-L-methionine is bound by residues Gly125 and 145–150 (LGDFVL).

Belongs to the RNA methyltransferase TrmD family. As to quaternary structure, homodimer.

Its subcellular location is the cytoplasm. It catalyses the reaction guanosine(37) in tRNA + S-adenosyl-L-methionine = N(1)-methylguanosine(37) in tRNA + S-adenosyl-L-homocysteine + H(+). In terms of biological role, specifically methylates guanosine-37 in various tRNAs. The chain is tRNA (guanine-N(1)-)-methyltransferase from Burkholderia mallei (strain NCTC 10247).